We begin with the raw amino-acid sequence, 212 residues long: Ras-related protein Rab-2A (212 aa).

Residue Ala2 is modified to N-acetylalanine. Residues 2 to 19 form a required for interaction with PRKCI region; that stretch reads AYAYLFKYIIIGDTGVGK. Gly16, Val17, Gly18, Lys19, Ser20, Cys21, and Thr38 together coordinate GTP. Mg(2+) is bound at residue Ser20. The short motif at 37-42 is the Switch 1 element; it reads LTMGVE. The Mg(2+) site is built by Thr38 and Asp61. Positions 63-72 match the Switch 2 motif; the sequence is AGQESFRSIT. 6 residues coordinate GTP: Gly64, Asn119, Lys120, Asp122, Ala150, and Lys151. Positions 190-212 are disordered; that stretch reads QHAATNASHGGNQGGQQAGGGCC. Residues 200-212 are compositionally biased toward gly residues; it reads GNQGGQQAGGGCC. Residues Cys211 and Cys212 are each lipidated (S-geranylgeranyl cysteine).

Belongs to the small GTPase superfamily. Rab family. As to quaternary structure, interacts with PRKCI. Interacts with TRIP11. Interacts (in GTP-bound form) with GARIN1B. Interacts (GTP-bound) with HOPS complex component VPS39; interaction contributes to obtaining a functional HOPS complex that promotes autophagosome-lysosome membrane fusion driven by STX17-SNAP29-VAMP8. May interact with VPS41. The cofactor is Mg(2+). Prenylated. Prenylation is required for association with cellular membranes.

It localises to the endoplasmic reticulum-Golgi intermediate compartment membrane. Its subcellular location is the melanosome. The protein resides in the endoplasmic reticulum membrane. The protein localises to the golgi apparatus membrane. It is found in the cytoplasmic vesicle. It localises to the secretory vesicle. Its subcellular location is the acrosome. The protein resides in the autophagosome membrane. It catalyses the reaction GTP + H2O = GDP + phosphate + H(+). Its activity is regulated as follows. Regulated by guanine nucleotide exchange factors (GEFs) which promote the exchange of bound GDP for free GTP, GTPase activating proteins (GAPs) which increase the GTP hydrolysis activity, and GDP dissociation inhibitors (GDIs) which inhibit the dissociation of the nucleotide from the GTPase. The small GTPases Rab are key regulators of intracellular membrane trafficking, from the formation of transport vesicles to their fusion with membranes. Rabs cycle between active GTP-bound and inactive GDP-bound states. In their active state, drive transport of vesicular carriers from donor organelles to acceptor organelles to regulate the membrane traffic that maintains organelle identity and morphology. RAB2A regulates autophagy by promoting autophagosome-lysosome fusion via recruitment of the HOPS endosomal tethering complex; this process involves autophagosomal RAB2A and lysosomal RAB39A recruitment of HOPS subcomplexes VPS39-VPS11 and VPS41-VPS16-VPS18-VPS33A, respectively, which assemble into a functional complex to mediate membrane tethering and SNAREs-driven membrane fusion. Required for protein transport from the endoplasmic reticulum to the Golgi complex. Regulates the compacted morphology of the Golgi. Together with RAB2B, redundantly required for efficient autophagic flux. This Rattus norvegicus (Rat) protein is Ras-related protein Rab-2A (Rab2a).